Consider the following 312-residue polypeptide: Probable cell division protein WhiA (312 aa).

Residues 274-308 (SLKELGTLVPGGPISKSGVNHRLRKLNAYADELRQ) constitute a DNA-binding region (H-T-H motif).

The protein belongs to the WhiA family.

In terms of biological role, involved in cell division and chromosome segregation. The polypeptide is Probable cell division protein WhiA (Limosilactobacillus fermentum (strain NBRC 3956 / LMG 18251) (Lactobacillus fermentum)).